The following is a 210-amino-acid chain: Fibroblast growth factor 21 (210 aa).

The signal sequence occupies residues M1–Q28. The segment at P144–S210 is disordered.

Belongs to the heparin-binding growth factors family. As to quaternary structure, interacts (via C-terminus) with KLB; this interaction is direct. Interacts with FGFR4. Most abundantly expressed in the liver, also expressed in the thymus at lower levels. Expressed in skeletal muscle (at protein level). Secreted in plasma (at protein level).

The protein resides in the secreted. Functionally, stimulates glucose uptake in differentiated adipocytes via the induction of glucose transporter SLC2A1/GLUT1 expression (but not SLC2A4/GLUT4 expression). Activity probably requires the presence of KLB. Regulates systemic glucose homeostasis and insulin sensitivity. This Mus musculus (Mouse) protein is Fibroblast growth factor 21 (Fgf21).